A 205-amino-acid chain; its full sequence is Non-structural protein NS3 (205 aa).

Positions 177–205 (GTRSPETGCRKVTSGLPHGASGGSGTRQG) are disordered. The segment covering 196–205 (ASGGSGTRQG) has biased composition (gly residues).

Belongs to the orbivirus NS3 family.

Functionally, may play a role in the release of virions from infected cells. This Broadhaven virus (BRD) protein is Non-structural protein NS3 (Segment-10).